The primary structure comprises 729 residues: Fatty acid oxidation complex subunit alpha (729 aa).

Positions 1–189 (MLYKGDTLYL…KIGLVDGVVK (189 aa)) are enoyl-CoA hydratase/isomerase. D296 is a binding site for substrate. The tract at residues 311–729 (ETPKQAAVLG…ARPVGDLKTA (419 aa)) is 3-hydroxyacyl-CoA dehydrogenase. Residues M324, D343, 400–402 (VVE), K407, and S429 contribute to the NAD(+) site. The active-site For 3-hydroxyacyl-CoA dehydrogenase activity is the H450. Residue N453 participates in NAD(+) binding. Residues N500 and Y660 each contribute to the substrate site. Residues 708-729 (RHNEPYYPPVEPARPVGDLKTA) are disordered.

The protein in the N-terminal section; belongs to the enoyl-CoA hydratase/isomerase family. This sequence in the C-terminal section; belongs to the 3-hydroxyacyl-CoA dehydrogenase family. In terms of assembly, heterotetramer of two alpha chains (FadB) and two beta chains (FadA).

It carries out the reaction a (3S)-3-hydroxyacyl-CoA + NAD(+) = a 3-oxoacyl-CoA + NADH + H(+). The catalysed reaction is a (3S)-3-hydroxyacyl-CoA = a (2E)-enoyl-CoA + H2O. It catalyses the reaction a 4-saturated-(3S)-3-hydroxyacyl-CoA = a (3E)-enoyl-CoA + H2O. The enzyme catalyses (3S)-3-hydroxybutanoyl-CoA = (3R)-3-hydroxybutanoyl-CoA. It carries out the reaction a (3Z)-enoyl-CoA = a 4-saturated (2E)-enoyl-CoA. The catalysed reaction is a (3E)-enoyl-CoA = a 4-saturated (2E)-enoyl-CoA. The protein operates within lipid metabolism; fatty acid beta-oxidation. Its function is as follows. Involved in the aerobic and anaerobic degradation of long-chain fatty acids via beta-oxidation cycle. Catalyzes the formation of 3-oxoacyl-CoA from enoyl-CoA via L-3-hydroxyacyl-CoA. It can also use D-3-hydroxyacyl-CoA and cis-3-enoyl-CoA as substrate. The chain is Fatty acid oxidation complex subunit alpha from Citrobacter koseri (strain ATCC BAA-895 / CDC 4225-83 / SGSC4696).